The primary structure comprises 89 residues: Probable Fe(2+)-trafficking protein (89 aa).

The protein belongs to the Fe(2+)-trafficking protein family.

Functionally, could be a mediator in iron transactions between iron acquisition and iron-requiring processes, such as synthesis and/or repair of Fe-S clusters in biosynthetic enzymes. This is Probable Fe(2+)-trafficking protein from Legionella pneumophila (strain Paris).